Here is a 273-residue protein sequence, read N- to C-terminus: Putative pyruvate, phosphate dikinase regulatory protein (273 aa).

Residue 153 to 160 coordinates ADP; the sequence is GISRTSKT.

The protein belongs to the pyruvate, phosphate/water dikinase regulatory protein family. PDRP subfamily.

It catalyses the reaction N(tele)-phospho-L-histidyl/L-threonyl-[pyruvate, phosphate dikinase] + ADP = N(tele)-phospho-L-histidyl/O-phospho-L-threonyl-[pyruvate, phosphate dikinase] + AMP + H(+). The enzyme catalyses N(tele)-phospho-L-histidyl/O-phospho-L-threonyl-[pyruvate, phosphate dikinase] + phosphate + H(+) = N(tele)-phospho-L-histidyl/L-threonyl-[pyruvate, phosphate dikinase] + diphosphate. Bifunctional serine/threonine kinase and phosphorylase involved in the regulation of the pyruvate, phosphate dikinase (PPDK) by catalyzing its phosphorylation/dephosphorylation. This chain is Putative pyruvate, phosphate dikinase regulatory protein, found in Rhizobium etli (strain ATCC 51251 / DSM 11541 / JCM 21823 / NBRC 15573 / CFN 42).